We begin with the raw amino-acid sequence, 501 residues long: Aldehyde dehydrogenase, cytosolic 1 (501 aa).

Residue 246–251 (GSTEVG) participates in NAD(+) binding. Residue Glu269 is the Proton acceptor of the active site. Cys303 serves as the catalytic Nucleophile.

It belongs to the aldehyde dehydrogenase family. As to quaternary structure, homotetramer. Eye specific, with very high expression in the lens.

It is found in the cytoplasm. The enzyme catalyses an aldehyde + NAD(+) + H2O = a carboxylate + NADH + 2 H(+). The protein operates within alcohol metabolism; ethanol degradation; acetate from ethanol: step 2/2. Major component of the eye of elephant shrews, which in contrast to other mammals, possesses both a lens- and a non-lens class-1 aldehyde dehydrogenase 1. This eye-specific form is a structural protein of the lens and, in other part of the eye, serves as the major form of ALDH1. Can convert/oxidize retinaldehyde to retinoic acid. The polypeptide is Aldehyde dehydrogenase, cytosolic 1 (ALDH1) (Macroscelides proboscideus (Short-eared elephant shrew)).